Consider the following 466-residue polypeptide: Fumarate hydratase class II (466 aa).

Substrate-binding positions include 100-102 (SGT), arginine 128, 131-134 (HPND), 141-143 (STN), and threonine 189. The active-site Proton donor/acceptor is the histidine 190. Serine 320 is a catalytic residue. Substrate is bound by residues serine 321 and 326-328 (KVN).

Belongs to the class-II fumarase/aspartase family. Fumarase subfamily. As to quaternary structure, homotetramer.

The protein localises to the cytoplasm. It carries out the reaction (S)-malate = fumarate + H2O. The protein operates within carbohydrate metabolism; tricarboxylic acid cycle; (S)-malate from fumarate: step 1/1. Functionally, involved in the TCA cycle. Catalyzes the stereospecific interconversion of fumarate to L-malate. In Prochlorococcus marinus (strain MIT 9313), this protein is Fumarate hydratase class II.